The chain runs to 690 residues: Wilms tumor protein 1-interacting protein homolog (690 aa).

2 disordered regions span residues 151 to 316 (MSAT…VSPR) and 328 to 372 (TLGS…PRSS). Residues 152–186 (SATSPRSSMASSASSSQEHSKYSSPRSSISSNALS) are compositionally biased toward low complexity. Composition is skewed to polar residues over residues 204–214 (EKYTSPRSSLG), 223–233 (PRSSYASTTSD), 240–261 (PRAS…TSGI), and 272–292 (PRSS…SYSD). Over residues 335–357 (SVVSPRSSISSHSSRSSRSSRGS) the composition is skewed to low complexity. LIM zinc-binding domains follow at residues 479–540 (GICI…SGFQ), 544–603 (DKCF…TVFA), and 604–673 (PKCA…RLSV).

This sequence belongs to the zyxin/ajuba family. In terms of assembly, interacts with prickle3.

It is found in the cell junction. Its subcellular location is the adherens junction. It localises to the nucleus. Its function is as follows. May monitor slit diaphragm protein assembly, a specialized adherens junction characteristic of podocytes. In case of podocyte injury, it shuttles into the nucleus and acts as a transcription regulator. Plays a role in the regulation of cell morphology and cytoskeletal organization. Acts as a transcriptional corepressor for snai1 and snai2/slug and plays a role in regulating neural crest development. Involved in the organization of the basal body. Involved in cilia growth and positioning. This chain is Wilms tumor protein 1-interacting protein homolog (wtip), found in Xenopus laevis (African clawed frog).